Reading from the N-terminus, the 130-residue chain is D-ribose pyranase (130 aa).

The active-site Proton donor is the His-20. Substrate-binding positions include Asp-28, His-97, and 119–121 (YAN).

This sequence belongs to the RbsD / FucU family. RbsD subfamily. In terms of assembly, homodecamer.

The protein localises to the cytoplasm. The enzyme catalyses beta-D-ribopyranose = beta-D-ribofuranose. The protein operates within carbohydrate metabolism; D-ribose degradation; D-ribose 5-phosphate from beta-D-ribopyranose: step 1/2. Functionally, catalyzes the interconversion of beta-pyran and beta-furan forms of D-ribose. This Heliobacterium modesticaldum (strain ATCC 51547 / Ice1) protein is D-ribose pyranase.